Consider the following 187-residue polypeptide: Threonylcarbamoyl-AMP synthase (187 aa).

In terms of domain architecture, YrdC-like spans 4–187 (TLTLSEAVTA…DARSGHILRL (184 aa)).

Belongs to the SUA5 family. TsaC subfamily.

The protein resides in the cytoplasm. The catalysed reaction is L-threonine + hydrogencarbonate + ATP = L-threonylcarbamoyladenylate + diphosphate + H2O. Functionally, required for the formation of a threonylcarbamoyl group on adenosine at position 37 (t(6)A37) in tRNAs that read codons beginning with adenine. Catalyzes the conversion of L-threonine, HCO(3)(-)/CO(2) and ATP to give threonylcarbamoyl-AMP (TC-AMP) as the acyladenylate intermediate, with the release of diphosphate. This chain is Threonylcarbamoyl-AMP synthase, found in Xylella fastidiosa (strain M12).